The chain runs to 117 residues: Small ribosomal subunit protein bS6 (117 aa).

The protein belongs to the bacterial ribosomal protein bS6 family.

In terms of biological role, binds together with bS18 to 16S ribosomal RNA. The polypeptide is Small ribosomal subunit protein bS6 (Roseobacter denitrificans (strain ATCC 33942 / OCh 114) (Erythrobacter sp. (strain OCh 114))).